The primary structure comprises 561 residues: Arf-GAP domain and FG repeat-containing protein 1 (561 aa).

Residues E11 to V135 form the Arf-GAP domain. The C4-type zinc-finger motif lies at C29–C52. A Phosphoserine modification is found at S167. The disordered stretch occupies residues A170–E193. Residues G176–Q191 show a composition bias toward polar residues. Position 177 is a phosphothreonine (T177). S181 and S362 each carry phosphoserine. The O-linked (GlcNAc) serine glycan is linked to S367. The segment at S413–N433 is disordered.

Interacts with FCHO1. Interacts with EPS15R and EPS15. Post-translationally, O-glycosylated. In terms of tissue distribution, expressed in the testes (at protein level).

It localises to the nucleus. The protein resides in the cytoplasmic vesicle. Its function is as follows. Required for vesicle docking or fusion during acrosome biogenesis. May play a role in RNA trafficking or localization. The sequence is that of Arf-GAP domain and FG repeat-containing protein 1 (Agfg1) from Mus musculus (Mouse).